The chain runs to 299 residues: MHVVILGSAAGGGVPQWNCRCSICSLAWAGDSRVRPRTQSSIAVSPDGERWLLLNASPDIRQQIQANPQMHPREGLRHSPIHAVLLTNGDVDHVAGLLTLREGQPFSLYATPGILASVSDNRVFDVMAAEVVKRQTIALNETFEPVPGLSVTLFSVPGKVPLWLEDASMEIGAETETTVGTMIEAGGKRLAYIPGCAGVTEDLKARIAGADALLFDGTVLEDDDMIRAGVGTKTGWRMGHIQMNGETGSIASLADVEIGRRVFVHINNTNPVLIEDSSERASVEARGWTVAHDGLTLDL.

Belongs to the PqqB family.

The protein operates within cofactor biosynthesis; pyrroloquinoline quinone biosynthesis. Its function is as follows. May be involved in the transport of PQQ or its precursor to the periplasm. In Methylorubrum extorquens (strain CM4 / NCIMB 13688) (Methylobacterium extorquens), this protein is Coenzyme PQQ synthesis protein B.